The chain runs to 499 residues: Dual specificity protein kinase CLK2 (499 aa).

Residues 1 to 65 are disordered; that stretch reads MPHPRRYHSS…RSSYDDHSSD (65 aa). Over residues 8-23 the composition is skewed to basic and acidic residues; sequence HSSERGSRGSYHEHYQ. Basic residues predominate over residues 24 to 33; it reads SRKHKRRRSR. Phosphoserine; by PKB/AKT1 is present on serine 34. A compositionally biased stretch (basic and acidic residues) spans 47-65; the sequence is REDSYHVRSRSSYDDHSSD. Position 98 is a phosphoserine; by autocatalysis (serine 98). Phosphotyrosine; by autocatalysis is present on tyrosine 99. The tract at residues 102–142 is disordered; it reads HRENSSYRSQRSSRRKHRRRRRRSRTFSRSSSHSSRRAKSV. A compositionally biased stretch (basic residues) spans 112 to 127; the sequence is RSSRRKHRRRRRRSRT. At threonine 127 the chain carries Phosphothreonine; by PKB/AKT1. Phosphoserine; by autocatalysis is present on serine 141. Phosphotyrosine is present on tyrosine 152. Residues 163 to 479 enclose the Protein kinase domain; it reads EIVSTLGEGT…GEALQHPFFA (317 aa). ATP-binding positions include 168–176 and lysine 192; that span reads LGEGTFGRV. Aspartate 289 (proton acceptor) is an active-site residue. Threonine 343 carries the phosphothreonine; by PKB/AKT2 modification.

Belongs to the protein kinase superfamily. CMGC Ser/Thr protein kinase family. Lammer subfamily. In terms of assembly, interacts with RBMX and UBL5. Interacts with AKT1. Post-translationally, autophosphorylates on all three types of residues. Phosphorylation on Ser-34 and Thr-127 by AKT1 is induced by ionizing radiation or insulin. Phosphorylation plays a critical role in cell proliferation following low dose radiation and prevents cell death following high dose radiation. Phosphorylation at Thr-343 by PKB/AKT2 induces its kinase activity which is required for its stability. The phosphorylation status at Ser-141 influences its subnuclear localization; inhibition of phosphorylation at Ser-141 results in accumulation in the nuclear speckle.

The protein localises to the nucleus. The protein resides in the nucleus speckle. It catalyses the reaction L-seryl-[protein] + ATP = O-phospho-L-seryl-[protein] + ADP + H(+). The enzyme catalyses L-threonyl-[protein] + ATP = O-phospho-L-threonyl-[protein] + ADP + H(+). It carries out the reaction L-tyrosyl-[protein] + ATP = O-phospho-L-tyrosyl-[protein] + ADP + H(+). Its activity is regulated as follows. 5,6-dichloro-1-b-D-ribofuranosylbenzimidazole (DRB) inhibits autophosphorylation. TG003 inhibits its kinase activity and affects the regulation of alternative splicing mediated by phosphorylation of SR proteins. In terms of biological role, dual specificity kinase acting on both serine/threonine and tyrosine-containing substrates. Phosphorylates serine- and arginine-rich (SR) proteins of the spliceosomal complex. May be a constituent of a network of regulatory mechanisms that enable SR proteins to control RNA splicing and can cause redistribution of SR proteins from speckles to a diffuse nucleoplasmic distribution. Acts as a suppressor of hepatic gluconeogenesis and glucose output by repressing PPARGC1A transcriptional activity on gluconeogenic genes via its phosphorylation. Phosphorylates PPP2R5B thereby stimulating the assembly of PP2A phosphatase with the PPP2R5B-AKT1 complex leading to dephosphorylation of AKT1. Phosphorylates: PTPN1, SRSF1 and SRSF3. Regulates the alternative splicing of tissue factor (F3) pre-mRNA in endothelial cells. Phosphorylates PAGE4 at several serine and threonine residues and this phosphorylation attenuates the ability of PAGE4 to potentiate the transcriptional activator activity of JUN. This Mus musculus (Mouse) protein is Dual specificity protein kinase CLK2 (Clk2).